The following is a 511-amino-acid chain: uncharacterized protein (511 aa).

This is an uncharacterized protein from Acanthamoeba polyphaga (Amoeba).